A 228-amino-acid polypeptide reads, in one-letter code: Leucyl/phenylalanyl-tRNA--protein transferase (228 aa).

It belongs to the L/F-transferase family.

The protein resides in the cytoplasm. It catalyses the reaction N-terminal L-lysyl-[protein] + L-leucyl-tRNA(Leu) = N-terminal L-leucyl-L-lysyl-[protein] + tRNA(Leu) + H(+). The catalysed reaction is N-terminal L-arginyl-[protein] + L-leucyl-tRNA(Leu) = N-terminal L-leucyl-L-arginyl-[protein] + tRNA(Leu) + H(+). The enzyme catalyses L-phenylalanyl-tRNA(Phe) + an N-terminal L-alpha-aminoacyl-[protein] = an N-terminal L-phenylalanyl-L-alpha-aminoacyl-[protein] + tRNA(Phe). Functions in the N-end rule pathway of protein degradation where it conjugates Leu, Phe and, less efficiently, Met from aminoacyl-tRNAs to the N-termini of proteins containing an N-terminal arginine or lysine. The chain is Leucyl/phenylalanyl-tRNA--protein transferase from Lawsonia intracellularis (strain PHE/MN1-00).